A 508-amino-acid polypeptide reads, in one-letter code: Bifunctional purine biosynthesis protein PurH (508 aa).

In terms of domain architecture, MGS-like spans 1–145; it reads MAKKALISVS…KNYKYVTILV (145 aa).

It belongs to the PurH family.

It catalyses the reaction (6R)-10-formyltetrahydrofolate + 5-amino-1-(5-phospho-beta-D-ribosyl)imidazole-4-carboxamide = 5-formamido-1-(5-phospho-D-ribosyl)imidazole-4-carboxamide + (6S)-5,6,7,8-tetrahydrofolate. It carries out the reaction IMP + H2O = 5-formamido-1-(5-phospho-D-ribosyl)imidazole-4-carboxamide. Its pathway is purine metabolism; IMP biosynthesis via de novo pathway; 5-formamido-1-(5-phospho-D-ribosyl)imidazole-4-carboxamide from 5-amino-1-(5-phospho-D-ribosyl)imidazole-4-carboxamide (10-formyl THF route): step 1/1. The protein operates within purine metabolism; IMP biosynthesis via de novo pathway; IMP from 5-formamido-1-(5-phospho-D-ribosyl)imidazole-4-carboxamide: step 1/1. This Thermoanaerobacter sp. (strain X514) protein is Bifunctional purine biosynthesis protein PurH.